We begin with the raw amino-acid sequence, 521 residues long: Glucomannan 4-beta-mannosyltransferase 1 (521 aa).

A helical transmembrane segment spans residues 22–42 (VIVPLLRLAVAVCLTMSVLLF). Asp123 is an active-site residue. Substrate-binding residues include Asp182 and Asp184. Asp276 is an active-site residue. A run of 4 helical transmembrane segments spans residues 355–375 (IIAH…TIFV), 391–411 (IITL…FFWI), 471–491 (VTEL…LAFG), and 495–515 (FFIY…GYVG).

This sequence belongs to the glycosyltransferase 2 family. Plant cellulose synthase-like A subfamily.

The protein localises to the golgi apparatus membrane. It catalyses the reaction GDP-mannose + (glucomannan)n = GDP + (glucomannan)n+1.. Functionally, possesses glucomannan synthase and mannan synthase activities in vitro. Mannan synthase consists of a 4-beta-mannosyltransferase activity on mannan using GDP-mannose. The beta-1,4-mannan product is the backbone for galactomannan synthesis by galactomannan galactosyltransferase. Galactomannan is a noncellulosic polysaccharides of plant cell wall. In Oryza sativa subsp. japonica (Rice), this protein is Glucomannan 4-beta-mannosyltransferase 1.